A 119-amino-acid polypeptide reads, in one-letter code: Holo-[acyl-carrier-protein] synthase (119 aa).

The Mg(2+) site is built by Asp5 and Glu51.

Belongs to the P-Pant transferase superfamily. AcpS family. The cofactor is Mg(2+).

Its subcellular location is the cytoplasm. It carries out the reaction apo-[ACP] + CoA = holo-[ACP] + adenosine 3',5'-bisphosphate + H(+). Its function is as follows. Transfers the 4'-phosphopantetheine moiety from coenzyme A to a Ser of acyl-carrier-protein. This chain is Holo-[acyl-carrier-protein] synthase, found in Helicobacter pylori (strain J99 / ATCC 700824) (Campylobacter pylori J99).